Reading from the N-terminus, the 476-residue chain is Glutamate--tRNA ligase (476 aa).

The short motif at 9–19 is the 'HIGH' region element; that stretch reads PSPTGKLHIGT. Over residues 109-129 the composition is skewed to basic and acidic residues; the sequence is REEQKSRNKPPRYDNRHRSLS. The tract at residues 109 to 133 is disordered; sequence REEQKSRNKPPRYDNRHRSLSTEEE. Positions 248-252 match the 'KMSKS' region motif; that stretch reads KLSKR. An ATP-binding site is contributed by Lys251.

This sequence belongs to the class-I aminoacyl-tRNA synthetase family. Glutamate--tRNA ligase type 1 subfamily. As to quaternary structure, monomer.

Its subcellular location is the cytoplasm. The catalysed reaction is tRNA(Glu) + L-glutamate + ATP = L-glutamyl-tRNA(Glu) + AMP + diphosphate. Catalyzes the attachment of glutamate to tRNA(Glu) in a two-step reaction: glutamate is first activated by ATP to form Glu-AMP and then transferred to the acceptor end of tRNA(Glu). This Prochlorococcus marinus (strain MIT 9211) protein is Glutamate--tRNA ligase.